The following is a 910-amino-acid chain: Seizure 6-like protein 2 (910 aa).

Residues Met-1 to Gly-27 form the signal peptide. Residues Leu-28–Asn-844 are Extracellular-facing. Residues Ser-41 to Ser-48 are O-glycosylated at one site. The interval Glu-65–Glu-152 is disordered. The segment covering Leu-123–Gly-145 has biased composition (pro residues). Cysteines 173 and 202 form a disulfide. The region spanning Cys-173 to Tyr-286 is the CUB 1 domain. Asn-176, Asn-222, and Asn-247 each carry an N-linked (GlcNAc...) asparagine glycan. Positions Leu-288–Ala-347 constitute a Sushi 1 domain. 6 disulfides stabilise this stretch: Cys-290/Cys-330, Cys-316/Cys-345, Cys-349/Cys-376, Cys-464/Cys-508, Cys-491/Cys-523, and Cys-527/Cys-553. Asn-332, Asn-355, Asn-373, Asn-473, and Asn-517 each carry an N-linked (GlcNAc...) asparagine glycan. Residues Cys-349–Phe-459 form the CUB 2 domain. The Sushi 2 domain occupies Asp-462–Ala-525. Residues Cys-527 to Val-638 enclose the CUB 3 domain. An N-linked (GlcNAc...) asparagine glycan is attached at Asn-641. Sushi domains follow at residues Asp-642–Lys-701, Met-703–Leu-766, and Glu-769–Val-830. Intrachain disulfides connect Cys-644–Cys-686, Cys-672–Cys-699, Cys-705–Cys-747, Cys-733–Cys-764, Cys-771–Cys-813, and Cys-799–Cys-828. The chain crosses the membrane as a helical span at residues Leu-845–Ile-865. The Cytoplasmic portion of the chain corresponds to Tyr-866–Ile-910.

The protein belongs to the SEZ6 family. Post-translationally, O-glycosylated with core 1 or possibly core 8 glycans.

It localises to the cell membrane. The protein localises to the endoplasmic reticulum membrane. Functionally, may contribute to specialized endoplasmic reticulum functions in neurons. This chain is Seizure 6-like protein 2 (SEZ6L2), found in Homo sapiens (Human).